Consider the following 240-residue polypeptide: Pyridoxine 5'-phosphate synthase (240 aa).

Residue N7 participates in 3-amino-2-oxopropyl phosphate binding. 9–10 contributes to the 1-deoxy-D-xylulose 5-phosphate binding site; it reads DH. R18 serves as a coordination point for 3-amino-2-oxopropyl phosphate. The active-site Proton acceptor is the H43. The 1-deoxy-D-xylulose 5-phosphate site is built by R45 and H50. E70 functions as the Proton acceptor in the catalytic mechanism. T100 provides a ligand contact to 1-deoxy-D-xylulose 5-phosphate. The Proton donor role is filled by H191. Residues G192 and 213 to 214 contribute to the 3-amino-2-oxopropyl phosphate site; that span reads GH.

It belongs to the PNP synthase family. As to quaternary structure, homooctamer; tetramer of dimers.

It is found in the cytoplasm. The enzyme catalyses 3-amino-2-oxopropyl phosphate + 1-deoxy-D-xylulose 5-phosphate = pyridoxine 5'-phosphate + phosphate + 2 H2O + H(+). It functions in the pathway cofactor biosynthesis; pyridoxine 5'-phosphate biosynthesis; pyridoxine 5'-phosphate from D-erythrose 4-phosphate: step 5/5. Catalyzes the complicated ring closure reaction between the two acyclic compounds 1-deoxy-D-xylulose-5-phosphate (DXP) and 3-amino-2-oxopropyl phosphate (1-amino-acetone-3-phosphate or AAP) to form pyridoxine 5'-phosphate (PNP) and inorganic phosphate. In Coxiella burnetii (strain Dugway 5J108-111), this protein is Pyridoxine 5'-phosphate synthase.